The chain runs to 67 residues: ATP synthase F(0) complex subunit 8 (67 aa).

Residues 8–24 (TWFTTIVAMILSLFILM) form a helical membrane-spanning segment. Lysine 54 carries the N6-acetyllysine; alternate modification. Lysine 54 carries the post-translational modification N6-succinyllysine; alternate. Residue lysine 57 is modified to N6-acetyllysine.

It belongs to the ATPase protein 8 family. In terms of assembly, component of the ATP synthase complex composed at least of ATP5F1A/subunit alpha, ATP5F1B/subunit beta, ATP5MC1/subunit c (homooctomer), MT-ATP6/subunit a, MT-ATP8/subunit 8, ATP5ME/subunit e, ATP5MF/subunit f, ATP5MG/subunit g, ATP5MK/subunit k, ATP5MJ/subunit j, ATP5F1C/subunit gamma, ATP5F1D/subunit delta, ATP5F1E/subunit epsilon, ATP5PF/subunit F6, ATP5PB/subunit b, ATP5PD/subunit d, ATP5PO/subunit OSCP. ATP synthase complex consists of a soluble F(1) head domain (subunits alpha(3) and beta(3)) - the catalytic core - and a membrane F(0) domain - the membrane proton channel (subunits c, a, 8, e, f, g, k and j). These two domains are linked by a central stalk (subunits gamma, delta, and epsilon) rotating inside the F1 region and a stationary peripheral stalk (subunits F6, b, d, and OSCP). Interacts with PRICKLE3.

The protein localises to the mitochondrion membrane. Functionally, subunit 8, of the mitochondrial membrane ATP synthase complex (F(1)F(0) ATP synthase or Complex V) that produces ATP from ADP in the presence of a proton gradient across the membrane which is generated by electron transport complexes of the respiratory chain. ATP synthase complex consist of a soluble F(1) head domain - the catalytic core - and a membrane F(1) domain - the membrane proton channel. These two domains are linked by a central stalk rotating inside the F(1) region and a stationary peripheral stalk. During catalysis, ATP synthesis in the catalytic domain of F(1) is coupled via a rotary mechanism of the central stalk subunits to proton translocation. In vivo, can only synthesize ATP although its ATP hydrolase activity can be activated artificially in vitro. Part of the complex F(0) domain. The protein is ATP synthase F(0) complex subunit 8 of Oryctolagus cuniculus (Rabbit).